The primary structure comprises 380 residues: NADPH quinone oxidoreductase (380 aa).

A mitochondrion-targeting transit peptide spans 1–17; that stretch reads MSSFLSKRFISTTQRAM.

It belongs to the zinc-containing alcohol dehydrogenase family. Quinone oxidoreductase subfamily. As to quaternary structure, homodimer.

It is found in the mitochondrion. It catalyses the reaction a quinone + NADH + H(+) = a quinol + NAD(+). It carries out the reaction a quinone + NADPH + H(+) = a quinol + NADP(+). Its function is as follows. NADPH quinone oxidoreductase that efficiently reduces 1,4-benzoquinone, whereas no activities are found for menadiones and methoxyquinones. The polypeptide is NADPH quinone oxidoreductase (Kluyveromyces marxianus (Yeast)).